The sequence spans 237 residues: tRNA (guanine-N(1)-)-methyltransferase (237 aa).

S-adenosyl-L-methionine-binding positions include glycine 113 and 133 to 138 (VGDFIV).

Belongs to the RNA methyltransferase TrmD family. As to quaternary structure, homodimer.

The protein localises to the cytoplasm. It carries out the reaction guanosine(37) in tRNA + S-adenosyl-L-methionine = N(1)-methylguanosine(37) in tRNA + S-adenosyl-L-homocysteine + H(+). Specifically methylates guanosine-37 in various tRNAs. The chain is tRNA (guanine-N(1)-)-methyltransferase from Hydrogenovibrio crunogenus (strain DSM 25203 / XCL-2) (Thiomicrospira crunogena).